A 625-amino-acid polypeptide reads, in one-letter code: Exonuclease mut-7 homolog (625 aa).

Serine 17 carries the phosphoserine modification. A 3'-5' exonuclease domain is found at 410-602; sequence LIIVNKADEF…IYNTLIERVS (193 aa).

This sequence belongs to the mut-7 family. As to quaternary structure, interacts with AGO1; the interaction is not RNA dependent. Mg(2+) is required as a cofactor.

In terms of biological role, possesses 3'-5' exoribonuclease activity. Required for 3'-end trimming of AGO1-bound miRNAs, in particular multiple-isoform miRNAs, which represents a critical step in miRNA maturation. The polypeptide is Exonuclease mut-7 homolog (Nbr) (Drosophila melanogaster (Fruit fly)).